We begin with the raw amino-acid sequence, 392 residues long: ATP phosphoribosyltransferase regulatory subunit (392 aa).

It belongs to the class-II aminoacyl-tRNA synthetase family. HisZ subfamily. Heteromultimer composed of HisG and HisZ subunits.

The protein localises to the cytoplasm. It functions in the pathway amino-acid biosynthesis; L-histidine biosynthesis; L-histidine from 5-phospho-alpha-D-ribose 1-diphosphate: step 1/9. In terms of biological role, required for the first step of histidine biosynthesis. May allow the feedback regulation of ATP phosphoribosyltransferase activity by histidine. The chain is ATP phosphoribosyltransferase regulatory subunit from Geobacillus sp. (strain WCH70).